Here is a 66-residue protein sequence, read N- to C-terminus: Beta-toxin Cbo4 (66 aa).

Positions 1-66 constitute an LCN-type CS-alpha/beta domain; that stretch reads KEGYIVDYHT…VWPLPNKRCK (66 aa). 4 cysteine pairs are disulfide-bonded: cysteine 12-cysteine 65, cysteine 16-cysteine 41, cysteine 25-cysteine 46, and cysteine 29-cysteine 48. Lysine 66 carries the lysine amide modification.

Belongs to the long (4 C-C) scorpion toxin superfamily. Sodium channel inhibitor family. Beta subfamily. Expressed by the venom gland.

Its subcellular location is the secreted. Beta toxins bind voltage-independently at site-4 of sodium channels and shift the voltage of activation toward more negative potentials thereby affecting sodium channel activation and promoting spontaneous and repetitive firing. Is active on the human voltage-gated sodium channels Nav1.4/SCN4A, Nav1.5/SCN5A and Nav1.6/SCN8A when tested at 200 nM. In vivo, is toxic to mice when intraperitoneally injected. The polypeptide is Beta-toxin Cbo4 (Centruroides bonito (Scorpion)).